A 580-amino-acid polypeptide reads, in one-letter code: Putative monoterpene synthase 8 (580 aa).

A chloroplast-targeting transit peptide spans 1–44; it reads MACTSNLSSLSKSWAVLDVPRGAPKATGLWLKRQFIFKTSRICM. Residues aspartate 333, aspartate 337, aspartate 478, threonine 482, and glutamate 486 each coordinate Mg(2+). Residues 333-337 carry the DDXXD motif motif; sequence DDIFD.

It belongs to the terpene synthase family. Tpsg subfamily. In terms of assembly, monomer. Mg(2+) serves as cofactor. Mn(2+) is required as a cofactor. In terms of tissue distribution, confined to flowers.

The protein resides in the plastid. Its subcellular location is the chloroplast. It participates in secondary metabolite biosynthesis; terpenoid biosynthesis. Functionally, monoterpene synthase (mono-TPS) involved in the biosynthesis of monoterpenes natural products, constituent of coffee beverage aroma. The protein is Putative monoterpene synthase 8 of Coffea arabica (Arabian coffee).